We begin with the raw amino-acid sequence, 96 residues long: MAHHNGPRKKTRYKFKKELRQRGLPPVTSVIQQFEVGEKVHIVVNSSVQKGMPHRRFHGLTGTVIGKRGRAWMLTIHDGNAEKTVIARPQHLKAQK.

The protein belongs to the eukaryotic ribosomal protein eL21 family.

The sequence is that of Large ribosomal subunit protein eL21 from Methanoregula boonei (strain DSM 21154 / JCM 14090 / 6A8).